We begin with the raw amino-acid sequence, 229 residues long: Echinolectin 1 (229 aa).

Residue Asn-94 is glycosylated (N-linked (GlcNAc...) asparagine).

The protein resides in the secreted. The polypeptide is Echinolectin 1 (Echinometra lucunter (Rock-boring urchin)).